The following is a 342-amino-acid chain: tRNA N6-adenosine threonylcarbamoyltransferase (342 aa).

Fe cation contacts are provided by His111 and His115. Residues 134–138, Asp167, Gly180, and Asn277 contribute to the substrate site; that span reads LVSGG. Asp305 provides a ligand contact to Fe cation.

This sequence belongs to the KAE1 / TsaD family. Requires Fe(2+) as cofactor.

Its subcellular location is the cytoplasm. It carries out the reaction L-threonylcarbamoyladenylate + adenosine(37) in tRNA = N(6)-L-threonylcarbamoyladenosine(37) in tRNA + AMP + H(+). Required for the formation of a threonylcarbamoyl group on adenosine at position 37 (t(6)A37) in tRNAs that read codons beginning with adenine. Is involved in the transfer of the threonylcarbamoyl moiety of threonylcarbamoyl-AMP (TC-AMP) to the N6 group of A37, together with TsaE and TsaB. TsaD likely plays a direct catalytic role in this reaction. In Haemophilus influenzae (strain ATCC 51907 / DSM 11121 / KW20 / Rd), this protein is tRNA N6-adenosine threonylcarbamoyltransferase.